A 420-amino-acid polypeptide reads, in one-letter code: Glucose-1-phosphate adenylyltransferase (420 aa).

Alpha-D-glucose 1-phosphate is bound by residues tyrosine 107, glycine 172, 187 to 188 (EK), and serine 205.

The protein belongs to the bacterial/plant glucose-1-phosphate adenylyltransferase family. As to quaternary structure, homotetramer.

It catalyses the reaction alpha-D-glucose 1-phosphate + ATP + H(+) = ADP-alpha-D-glucose + diphosphate. It functions in the pathway glycan biosynthesis; glycogen biosynthesis. Functionally, involved in the biosynthesis of ADP-glucose, a building block required for the elongation reactions to produce glycogen. Catalyzes the reaction between ATP and alpha-D-glucose 1-phosphate (G1P) to produce pyrophosphate and ADP-Glc. The polypeptide is Glucose-1-phosphate adenylyltransferase (Rhizobium meliloti (strain 1021) (Ensifer meliloti)).